A 178-amino-acid chain; its full sequence is Ribose 1,5-bisphosphate phosphokinase PhnN (178 aa).

ATP is bound at residue 9-16 (GPSGSGKD).

Belongs to the ribose 1,5-bisphosphokinase family.

It carries out the reaction alpha-D-ribose 1,5-bisphosphate + ATP = 5-phospho-alpha-D-ribose 1-diphosphate + ADP. It participates in metabolic intermediate biosynthesis; 5-phospho-alpha-D-ribose 1-diphosphate biosynthesis; 5-phospho-alpha-D-ribose 1-diphosphate from D-ribose 5-phosphate (route II): step 3/3. In terms of biological role, catalyzes the phosphorylation of ribose 1,5-bisphosphate to 5-phospho-D-ribosyl alpha-1-diphosphate (PRPP). The sequence is that of Ribose 1,5-bisphosphate phosphokinase PhnN from Pantoea vagans (strain C9-1) (Pantoea agglomerans (strain C9-1)).